The chain runs to 97 residues: Small ribosomal subunit protein bS6 (97 aa).

The protein belongs to the bacterial ribosomal protein bS6 family.

Binds together with bS18 to 16S ribosomal RNA. The sequence is that of Small ribosomal subunit protein bS6 from Limosilactobacillus fermentum (strain NBRC 3956 / LMG 18251) (Lactobacillus fermentum).